Here is a 488-residue protein sequence, read N- to C-terminus: Glutamyl-tRNA(Gln) amidotransferase subunit A (488 aa).

Active-site charge relay system residues include lysine 77 and serine 152. Serine 176 (acyl-ester intermediate) is an active-site residue.

This sequence belongs to the amidase family. GatA subfamily. As to quaternary structure, heterotrimer of A, B and C subunits.

It carries out the reaction L-glutamyl-tRNA(Gln) + L-glutamine + ATP + H2O = L-glutaminyl-tRNA(Gln) + L-glutamate + ADP + phosphate + H(+). Its function is as follows. Allows the formation of correctly charged Gln-tRNA(Gln) through the transamidation of misacylated Glu-tRNA(Gln) in organisms which lack glutaminyl-tRNA synthetase. The reaction takes place in the presence of glutamine and ATP through an activated gamma-phospho-Glu-tRNA(Gln). The protein is Glutamyl-tRNA(Gln) amidotransferase subunit A of Streptococcus pneumoniae (strain ATCC 700669 / Spain 23F-1).